We begin with the raw amino-acid sequence, 147 residues long: Calmodulin (147 aa).

EF-hand domains lie at 8–43 (EQIA…LGLS), 44–79 (PSEA…QLKC), 81–116 (DSEQ…IGEK), and 120–147 (AEVD…LLSK). Asp21, Asp23, Ser25, Ser27, Glu32, Asp57, Asp59, Asn61, Glu68, Asp94, Asn96, Asp98, and Glu105 together coordinate Ca(2+).

Belongs to the calmodulin family.

Functionally, calmodulin mediates the control of a large number of enzymes, ion channels and other proteins by Ca(2+). Among the enzymes to be stimulated by the calmodulin-Ca(2+) complex are a number of protein kinases and phosphatases. The sequence is that of Calmodulin (CMD1) from Kluyveromyces lactis (strain ATCC 8585 / CBS 2359 / DSM 70799 / NBRC 1267 / NRRL Y-1140 / WM37) (Yeast).